The chain runs to 155 residues: Protein LOL2 (155 aa).

N-acetylmethionine is present on Met1. The tract at residues 1-35 (MEEIQQQTQKEEQKHREEEEEEEEGPPPGWESAVL) is disordered. 2 putative zinc finger regions span residues 60–90 (QMVCGSCRRLLSYLRGSKHVKCSSCQTVNLV) and 98–128 (QVNCNNCKLLLMYPYGAPAVRCSSCNSVTDI). A disordered region spans residues 130–155 (ENNKRPPWSEQQGPLKSLSSLRRAEN). The segment covering 138–149 (SEQQGPLKSLSS) has biased composition (polar residues).

Its subcellular location is the nucleus. In terms of biological role, putative zinc finger that may be involved in programmed cell death and defense response. In Arabidopsis thaliana (Mouse-ear cress), this protein is Protein LOL2 (LOL2).